A 310-amino-acid chain; its full sequence is Translocator protein BipD (310 aa).

2 coiled-coil regions span residues 127-171 and 250-299; these read DPIL…LQDY and DTAR…AIST.

This sequence belongs to the invasin protein D family.

The protein resides in the secreted. Required for invasion of epithelial cells, as well as for survival within host cells, escape from endocytic vesicles and subsequent actin-tail formation. Probably regulates the secretion of effectors BipB and BipC and their final integration into the target cell membrane. The sequence is that of Translocator protein BipD (bipD) from Burkholderia mallei (strain NCTC 10247).